A 95-amino-acid chain; its full sequence is Nucleoid-associated protein MARTH_orf159 (95 aa).

The protein belongs to the YbaB/EbfC family. Homodimer.

The protein resides in the cytoplasm. Its subcellular location is the nucleoid. Binds to DNA and alters its conformation. May be involved in regulation of gene expression, nucleoid organization and DNA protection. The polypeptide is Nucleoid-associated protein MARTH_orf159 (Metamycoplasma arthritidis (strain 158L3-1) (Mycoplasma arthritidis)).